The following is a 167-amino-acid chain: Biotin carboxyl carrier protein of acetyl-CoA carboxylase (167 aa).

Positions 53–91 (SGFSQERPIPTDPKKDTIKETTTENSETSTTTSSGDFIS) are disordered. Over residues 64-74 (DPKKDTIKETT) the composition is skewed to basic and acidic residues. The segment covering 75-86 (TENSETSTTTSS) has biased composition (low complexity). The 77-residue stretch at 87–163 (GDFISSPLVG…QFGSKLFRIA (77 aa)) folds into the Biotinyl-binding domain. Lys129 is subject to N6-biotinyllysine.

Homodimer.

It participates in lipid metabolism; fatty acid biosynthesis. This protein is a component of the acetyl coenzyme A carboxylase complex; first, biotin carboxylase catalyzes the carboxylation of the carrier protein and then the transcarboxylase transfers the carboxyl group to form malonyl-CoA. The sequence is that of Biotin carboxyl carrier protein of acetyl-CoA carboxylase (accB) from Chlamydia pneumoniae (Chlamydophila pneumoniae).